Here is a 635-residue protein sequence, read N- to C-terminus: Threonine--tRNA ligase (635 aa).

In terms of domain architecture, TGS spans 1–62; the sequence is MITITLPDGS…EHDAILRIIT (62 aa). Positions 244-535 are catalytic; that stretch reads DHRKIGKAQD…LIEHYAGIWP (292 aa). C335, H386, and H512 together coordinate Zn(2+).

This sequence belongs to the class-II aminoacyl-tRNA synthetase family. Homodimer. Requires Zn(2+) as cofactor.

The protein resides in the cytoplasm. It catalyses the reaction tRNA(Thr) + L-threonine + ATP = L-threonyl-tRNA(Thr) + AMP + diphosphate + H(+). Catalyzes the attachment of threonine to tRNA(Thr) in a two-step reaction: L-threonine is first activated by ATP to form Thr-AMP and then transferred to the acceptor end of tRNA(Thr). Also edits incorrectly charged L-seryl-tRNA(Thr). The protein is Threonine--tRNA ligase of Xylella fastidiosa (strain M12).